A 389-amino-acid polypeptide reads, in one-letter code: Chalcone synthase 3 (389 aa).

Residue Cys-164 is part of the active site.

This sequence belongs to the thiolase-like superfamily. Chalcone/stilbene synthases family.

The catalysed reaction is (E)-4-coumaroyl-CoA + 3 malonyl-CoA + 3 H(+) = 2',4,4',6'-tetrahydroxychalcone + 3 CO2 + 4 CoA. It functions in the pathway secondary metabolite biosynthesis; flavonoid biosynthesis. In terms of biological role, the primary product of this enzyme is 4,2',4',6'-tetrahydroxychalcone (also termed naringenin-chalcone or chalcone) which can under specific conditions spontaneously isomerize into naringenin. In Camellia sinensis (Tea plant), this protein is Chalcone synthase 3 (CHS3).